A 306-amino-acid polypeptide reads, in one-letter code: D-alanine--D-alanine ligase (306 aa).

The region spanning 106–301 (KLLWQSAGIN…FEELVLKILG (196 aa)) is the ATP-grasp domain. 132–187 (AKELGLPLIVKPSREGSTIGLSKVREAGEVAAAWHLAARHDAMVLAEQFIEGTELT) lines the ATP pocket. 3 residues coordinate Mg(2+): Asp255, Glu268, and Asn270.

Belongs to the D-alanine--D-alanine ligase family. Mg(2+) is required as a cofactor. Requires Mn(2+) as cofactor.

The protein localises to the cytoplasm. The enzyme catalyses 2 D-alanine + ATP = D-alanyl-D-alanine + ADP + phosphate + H(+). It participates in cell wall biogenesis; peptidoglycan biosynthesis. In terms of biological role, cell wall formation. The protein is D-alanine--D-alanine ligase of Nitrosospira multiformis (strain ATCC 25196 / NCIMB 11849 / C 71).